A 222-amino-acid polypeptide reads, in one-letter code: S-crystallin SL20-1 (222 aa).

The GST N-terminal domain occupies 2–80 (PNYTLYYFNG…YLARENGYYG (79 aa)). The 141-residue stretch at 82–222 (NNMDMFRIDY…YLKKRNNTNW (141 aa)) folds into the GST C-terminal domain.

Belongs to the GST superfamily. As to expression, lens.

In terms of biological role, S-crystallins are structural components of squids and octopi eye lens. Contains relatively little if any GST activity. The sequence is that of S-crystallin SL20-1 from Nototodarus sloanii (Wellington flying squid).